Reading from the N-terminus, the 129-residue chain is DNA-directed RNA polymerase subunit omega (129 aa).

A disordered region spans residues 76–101 (EVDEPEPDPVTLAASAADGEDDDQPE).

It belongs to the RNA polymerase subunit omega family. As to quaternary structure, the RNAP catalytic core consists of 2 alpha, 1 beta, 1 beta' and 1 omega subunit. When a sigma factor is associated with the core the holoenzyme is formed, which can initiate transcription.

It catalyses the reaction RNA(n) + a ribonucleoside 5'-triphosphate = RNA(n+1) + diphosphate. Promotes RNA polymerase assembly. Latches the N- and C-terminal regions of the beta' subunit thereby facilitating its interaction with the beta and alpha subunits. The chain is DNA-directed RNA polymerase subunit omega from Agrobacterium fabrum (strain C58 / ATCC 33970) (Agrobacterium tumefaciens (strain C58)).